A 209-amino-acid chain; its full sequence is Ribosomal RNA large subunit methyltransferase E (209 aa).

5 residues coordinate S-adenosyl-L-methionine: Gly63, Trp65, Asp83, Asp99, and Asp124. Lys164 functions as the Proton acceptor in the catalytic mechanism.

It belongs to the class I-like SAM-binding methyltransferase superfamily. RNA methyltransferase RlmE family.

Its subcellular location is the cytoplasm. The catalysed reaction is uridine(2552) in 23S rRNA + S-adenosyl-L-methionine = 2'-O-methyluridine(2552) in 23S rRNA + S-adenosyl-L-homocysteine + H(+). Its function is as follows. Specifically methylates the uridine in position 2552 of 23S rRNA at the 2'-O position of the ribose in the fully assembled 50S ribosomal subunit. This chain is Ribosomal RNA large subunit methyltransferase E, found in Aliivibrio salmonicida (strain LFI1238) (Vibrio salmonicida (strain LFI1238)).